Consider the following 337-residue polypeptide: Heme A synthase (337 aa).

The next 5 helical transmembrane spans lie at 6 to 26 (ITKW…IGGI), 93 to 113 (GRIT…KDVI), 118 to 138 (ILPY…GWYM), 154 to 174 (LAFH…QLIK), and 192 to 212 (LIFS…GAMV). Position 256 (His256) interacts with heme. The next 3 helical transmembrane spans lie at 258-278 (LGGY…LKIE), 285-305 (IAYF…ITLL), and 308-328 (VPII…SIII). Residue His316 coordinates heme.

This sequence belongs to the COX15/CtaA family. Type 2 subfamily. In terms of assembly, interacts with CtaB. The cofactor is heme b.

The protein resides in the cell membrane. It catalyses the reaction Fe(II)-heme o + 2 A + H2O = Fe(II)-heme a + 2 AH2. It participates in porphyrin-containing compound metabolism; heme A biosynthesis; heme A from heme O: step 1/1. In terms of biological role, catalyzes the conversion of heme O to heme A by two successive hydroxylations of the methyl group at C8. The first hydroxylation forms heme I, the second hydroxylation results in an unstable dihydroxymethyl group, which spontaneously dehydrates, resulting in the formyl group of heme A. The polypeptide is Heme A synthase (Rickettsia felis (strain ATCC VR-1525 / URRWXCal2) (Rickettsia azadi)).